Consider the following 152-residue polypeptide: Large ribosomal subunit protein uL30 (152 aa).

Belongs to the universal ribosomal protein uL30 family. Part of the 50S ribosomal subunit.

This is Large ribosomal subunit protein uL30 from Archaeoglobus fulgidus (strain ATCC 49558 / DSM 4304 / JCM 9628 / NBRC 100126 / VC-16).